The following is an 872-amino-acid chain: Bifunctional heparan sulfate N-deacetylase/N-sulfotransferase 4 (872 aa).

The Cytoplasmic portion of the chain corresponds to 1 to 13 (MNLILKFRRSFRT). Residues 14–34 (LIVLLATFCLVSILISAYFLY) form a helical; Signal-anchor for type II membrane protein membrane-spanning segment. The Lumenal segment spans residues 35–872 (SGYKQEMTLI…WLRQELQKVR (838 aa)). The tract at residues 36–588 (GYKQEMTLIE…KRHKDIWSRE (553 aa)) is heparan sulfate N-deacetylase 4. Residues Asn226, Asn341, and Asn391 are each glycosylated (N-linked (GlcNAc...) asparagine). Positions 589-872 (KTCDHLPKFL…WLRQELQKVR (284 aa)) are heparan sulfate N-sulfotransferase 4. Lys604 (for sulfotransferase activity) is an active-site residue. Residue 604 to 608 (KTGTT) coordinates 3'-phosphoadenylyl sulfate. The N-linked (GlcNAc...) asparagine glycan is linked to Asn657. Ser702 is a binding site for 3'-phosphoadenylyl sulfate. Residue Asn793 is glycosylated (N-linked (GlcNAc...) asparagine). Cys808 and Cys818 form a disulfide bridge. Residue 823 to 827 (KGRKY) coordinates 3'-phosphoadenylyl sulfate.

The protein belongs to the sulfotransferase 1 family. NDST subfamily. Monomer. In terms of tissue distribution, expressed at low level in brain and throughout embryogenesis. Not expressed in other tissues.

The protein resides in the golgi apparatus membrane. The catalysed reaction is alpha-D-glucosaminyl-[heparan sulfate](n) + 3'-phosphoadenylyl sulfate = N-sulfo-alpha-D-glucosaminyl-[heparan sulfate](n) + adenosine 3',5'-bisphosphate + 2 H(+). It participates in glycan metabolism; heparan sulfate biosynthesis. The protein operates within glycan metabolism; heparin biosynthesis. Its function is as follows. Essential bifunctional enzyme that catalyzes both the N-deacetylation and the N-sulfation of glucosamine (GlcNAc) of the glycosaminoglycan in heparan sulfate. Modifies the GlcNAc-GlcA disaccharide repeating sugar backbone to make N-sulfated heparosan, a prerequisite substrate for later modifications in heparin biosynthesis. Has low deacetylase activity but high sulfotransferase activity. In Mus musculus (Mouse), this protein is Bifunctional heparan sulfate N-deacetylase/N-sulfotransferase 4 (Ndst4).